We begin with the raw amino-acid sequence, 82 residues long: MKLTCVVIVAVLFLTAWTLVMADDSNNGLANLFSKSRDEMEDPEAAKLEKNYCQEKWDYCPVPFLGSRYCCDGLFCTLFFCA.

The N-terminal stretch at 1 to 22 is a signal peptide; sequence MKLTCVVIVAVLFLTAWTLVMA. A propeptide spanning residues 23-50 is cleaved from the precursor; that stretch reads DDSNNGLANLFSKSRDEMEDPEAAKLEK. 3 disulfide bridges follow: Cys-53–Cys-71, Cys-60–Cys-76, and Cys-70–Cys-81.

This sequence belongs to the conotoxin O1 superfamily. In terms of tissue distribution, expressed by the venom duct.

Its subcellular location is the secreted. Its function is as follows. Omega-conotoxins act at presynaptic membranes, they bind and block voltage-gated calcium channels (Cav). The sequence is that of Omega-conotoxin-like TxO6 from Conus textile (Cloth-of-gold cone).